A 71-amino-acid chain; its full sequence is Large ribosomal subunit protein bL31 (71 aa).

4 residues coordinate Zn(2+): cysteine 16, cysteine 18, cysteine 36, and cysteine 39.

This sequence belongs to the bacterial ribosomal protein bL31 family. Type A subfamily. Part of the 50S ribosomal subunit. It depends on Zn(2+) as a cofactor.

Binds the 23S rRNA. The chain is Large ribosomal subunit protein bL31 from Thermus thermophilus (strain ATCC BAA-163 / DSM 7039 / HB27).